Reading from the N-terminus, the 213-residue chain is Holliday junction branch migration complex subunit RuvA (213 aa).

A domain I region spans residues 1–69; the sequence is MISYLKGIVA…EEIPLLYGFS (69 aa). The interval 70 to 148 is domain II; sequence SPAERDLFRH…EWRKSAGFFV (79 aa). A flexible linker region spans residues 149 to 158; that stretch reads ATEGPAPGIL. The interval 158-213 is domain III; it reads LEEVQMTLFALGYTAHEVSHALHVVSEDIGLPKDAYVEDWIKQAIAHLSSSEQVSH.

Belongs to the RuvA family. Homotetramer. Forms an RuvA(8)-RuvB(12)-Holliday junction (HJ) complex. HJ DNA is sandwiched between 2 RuvA tetramers; dsDNA enters through RuvA and exits via RuvB. An RuvB hexamer assembles on each DNA strand where it exits the tetramer. Each RuvB hexamer is contacted by two RuvA subunits (via domain III) on 2 adjacent RuvB subunits; this complex drives branch migration. In the full resolvosome a probable DNA-RuvA(4)-RuvB(12)-RuvC(2) complex forms which resolves the HJ.

Its subcellular location is the cytoplasm. Its function is as follows. The RuvA-RuvB-RuvC complex processes Holliday junction (HJ) DNA during genetic recombination and DNA repair, while the RuvA-RuvB complex plays an important role in the rescue of blocked DNA replication forks via replication fork reversal (RFR). RuvA specifically binds to HJ cruciform DNA, conferring on it an open structure. The RuvB hexamer acts as an ATP-dependent pump, pulling dsDNA into and through the RuvAB complex. HJ branch migration allows RuvC to scan DNA until it finds its consensus sequence, where it cleaves and resolves the cruciform DNA. In Nostoc sp. (strain PCC 7120 / SAG 25.82 / UTEX 2576), this protein is Holliday junction branch migration complex subunit RuvA.